The sequence spans 623 residues: AM-toxin biosynthesis protein 12-2 (623 aa).

Residues 110-129 (TIPGTSQAKNTEPDHQASGL) form a disordered region.

Its pathway is mycotoxin biosynthesis. Its function is as follows. Part of the gene clusters that mediate the biosynthesis of AM-toxins, host-selective toxins (HSTs) causing Alternaria blotch on apple, a worldwide distributed disease. AM-toxins are cyclic depsipeptides containing the 3 residues 2-hydroxy-isovaleric acid (2-HIV), dehydroalanine, L-alanine which are common for all 3 AM-toxins I to III. The fourth precursor is L-alpha-amino-methoxyphenyl-valeric acid (L-Amv) for AM-toxin I, L-alpha-amino-phenyl-valeric acid (L-Apv) for AM-toxin II, and L-alpha-amino-hydroxyphenyl-valeric acid (L-Ahv) for AM-toxin III. AM-toxins have two target sites for affecting susceptible apple cells; they cause invagination of the plasma membrane and electrolyte loss and chloroplast disorganization. The non-ribosomal peptide synthetase AMT1 contains 4 catalytic modules and is responsible for activation of each residue in AM-toxin. The aldo-keto reductase AMT2 catalyzes the conversion of 2-keto-isovaleric acid (2-KIV) to 2-hydroxy-isovaleric acid (2-HIV), one of the precursor residues incorporated by AMT1 during AM-toxin biosynthesis, by reduction of its ketone to an alcohol. The cytochrome P450 monooxygenase AMT3 and the thioesterase AMT4 are also important for AM-toxin production, but their exact function within the AM-toxin biosynthesis are not known yet. Up to 21 proteins (including AMT1 to AMT4) are predicted to be involved in AM-toxin biosynthesis since their expression ishighly up-regulated in AM-toxin-producing cultures. The polypeptide is AM-toxin biosynthesis protein 12-2 (Alternaria alternata (Alternaria rot fungus)).